We begin with the raw amino-acid sequence, 221 residues long: Sugar transporter SWEET1 (221 aa).

A run of 7 helical transmembrane segments spans residues Ala3–Phe23, Val42–Ala62, Ile68–Leu88, Val96–Trp116, Leu126–Ala146, Leu160–Phe180, and Tyr186–Trp206. The MtN3/slv 1 domain maps to Leu10–Lys94. One can recognise a MtN3/slv 2 domain in the interval Gln127–Gln212. The tract at residues Ala149–Thr221 is mediates interaction with TRPV2.

Belongs to the SWEET sugar transporter family. As to quaternary structure, interacts with TRPV2; the interaction probably occurs intracellularly and depends on TRPV2 N-glycosylation.

The protein localises to the golgi apparatus membrane. It localises to the cell membrane. In terms of biological role, mediates sugar transport across membranes. May stimulate V(D)J recombination by the activation of RAG1. In Papio anubis (Olive baboon), this protein is Sugar transporter SWEET1 (SLC50A1).